Consider the following 208-residue polypeptide: Outer-membrane lipoprotein carrier protein (208 aa).

An N-terminal signal peptide occupies residues 1 to 22 (MKKIFAIAALSLPLFSHFPAFA).

This sequence belongs to the LolA family. As to quaternary structure, monomer.

Its subcellular location is the periplasm. Participates in the translocation of lipoproteins from the inner membrane to the outer membrane. Only forms a complex with a lipoprotein if the residue after the N-terminal Cys is not an aspartate (The Asp acts as a targeting signal to indicate that the lipoprotein should stay in the inner membrane). In Shewanella halifaxensis (strain HAW-EB4), this protein is Outer-membrane lipoprotein carrier protein.